Here is a 356-residue protein sequence, read N- to C-terminus: Alanine racemase, catabolic (356 aa).

Residue Lys-35 is the Proton acceptor; specific for D-alanine of the active site. Residue Lys-35 is modified to N6-(pyridoxal phosphate)lysine. Position 130 (Arg-130) interacts with substrate. Tyr-253 functions as the Proton acceptor; specific for L-alanine in the catalytic mechanism. Met-301 provides a ligand contact to substrate.

The protein belongs to the alanine racemase family. Pyridoxal 5'-phosphate serves as cofactor.

It carries out the reaction L-alanine = D-alanine. Its function is as follows. Isomerizes L-alanine to D-alanine which is then oxidized to pyruvate by DadA. In Escherichia coli (strain K12), this protein is Alanine racemase, catabolic (dadX).